The primary structure comprises 343 residues: Phospholipid phosphatase-related protein type 2 (343 aa).

Transmembrane regions (helical) follow at residues 12 to 32, 72 to 92, and 129 to 149; these read FSII…VVLL, ALIY…GELA, and FLGV…AGQV. The N-linked (GlcNAc...) asparagine glycan is linked to asparagine 165. The next 3 membrane-spanning stretches (helical) occupy residues 210–230, 239–259, and 266–286; these read AALC…VFRV, SLCL…VAEY, and VLAG…CVVH. Residues 291-343 are disordered; the sequence is RPHSGRRLSPWEDLSQAPTMDSPLEKNPRPAGRIRHRHGSPHPSRRTVPAVAT. Phosphoserine occurs at positions 299 and 312. Positions 322 to 335 are enriched in basic residues; that stretch reads GRIRHRHGSPHPSR.

The protein belongs to the PA-phosphatase related phosphoesterase family.

The protein resides in the membrane. The polypeptide is Phospholipid phosphatase-related protein type 2 (Mus musculus (Mouse)).